The chain runs to 405 residues: Syndecan-3 (405 aa).

Residues 1–22 form the signal peptide; the sequence is MPAELRRLAVLLLLLSARAALA. Topologically, residues 23–347 are extracellular; the sequence is QPWRNENYER…PQKNILERKE (325 aa). The interval 31-59 is disordered; the sequence is ERPVDLEGSGDDDPFGDDELDDIYSGSGS. Acidic residues predominate over residues 38 to 52; the sequence is GSGDDDPFGDDELDD. Residues serine 39, serine 55, serine 57, serine 59, and serine 66 are each glycosylated (O-linked (Xyl...) (glycosaminoglycan) serine). Disordered stretches follow at residues 134-159 and 191-301; these read TTTA…ATTT and TRAT…ELGN. The segment covering 191 to 201 has biased composition (low complexity); sequence TRATTLETPTT. Polar residues predominate over residues 202-237; sequence SIPETSVLTEVTTSRLVPSSTAKPRSLPKPSTSRTA. Residues serine 280, serine 283, and serine 330 are each glycosylated (O-linked (Xyl...) (glycosaminoglycan) serine). Residues 348 to 372 form a helical membrane-spanning segment; it reads VLIAVIVGGVVGALFAAFLVMLLIY. The Cytoplasmic portion of the chain corresponds to 373 to 405; that stretch reads RMKKKDEGSYTLEEPKQANVTYQKPDKQEEFYA.

Belongs to the syndecan proteoglycan family. In terms of processing, O-glycosylated within the Thr/Ser-rich region which could interact with lectin domains on other molecules. As to expression, proximal chondrogenic central core of embryonic limb buds where cartilage differentiation is being initiated.

It localises to the membrane. Its function is as follows. Cell surface proteoglycan that may bear both heparan sulfate and chondroitin sulfate. The multiple functional domains provide potential sites for mediating the adhesive cell-matrix interactions and cytoskeletal reorganization involved in limb chondrogenesis. Interaction with other matrix ligands as well as phosphorylation and shedding of the ectodomain might be involved in cell shape changes that occur during chondrogenesis. Furthermore, shedding of the ectodomain might break the adhesive interactions that promoted condensation, thus facilitating the deposition of cartilage matrix molecules. This is Syndecan-3 (SDC3) from Gallus gallus (Chicken).